Reading from the N-terminus, the 129-residue chain is Glycine cleavage system H protein (129 aa).

The region spanning 23–104 (TATIGITQHA…AYAAWLFRLK (82 aa)) is the Lipoyl-binding domain. Lys64 is modified (N6-lipoyllysine).

It belongs to the GcvH family. As to quaternary structure, the glycine cleavage system is composed of four proteins: P, T, L and H. (R)-lipoate serves as cofactor.

Functionally, the glycine cleavage system catalyzes the degradation of glycine. The H protein shuttles the methylamine group of glycine from the P protein to the T protein. This chain is Glycine cleavage system H protein, found in Nitrosospira multiformis (strain ATCC 25196 / NCIMB 11849 / C 71).